A 190-amino-acid chain; its full sequence is Threonylcarbamoyl-AMP synthase (190 aa).

Residues 7-190 (GDAIAAAIDV…ALTGELFRQG (184 aa)) form the YrdC-like domain.

Belongs to the SUA5 family. TsaC subfamily.

The protein localises to the cytoplasm. The enzyme catalyses L-threonine + hydrogencarbonate + ATP = L-threonylcarbamoyladenylate + diphosphate + H2O. In terms of biological role, required for the formation of a threonylcarbamoyl group on adenosine at position 37 (t(6)A37) in tRNAs that read codons beginning with adenine. Catalyzes the conversion of L-threonine, HCO(3)(-)/CO(2) and ATP to give threonylcarbamoyl-AMP (TC-AMP) as the acyladenylate intermediate, with the release of diphosphate. In Escherichia coli O1:K1 / APEC, this protein is Threonylcarbamoyl-AMP synthase.